Consider the following 253-residue polypeptide: Uracil-DNA glycosylase (253 aa).

The Proton acceptor role is filled by Asp-79.

It belongs to the uracil-DNA glycosylase (UDG) superfamily. UNG family.

Its subcellular location is the cytoplasm. The catalysed reaction is Hydrolyzes single-stranded DNA or mismatched double-stranded DNA and polynucleotides, releasing free uracil.. In terms of biological role, excises uracil residues from the DNA which can arise as a result of misincorporation of dUMP residues by DNA polymerase or due to deamination of cytosine. This Xylella fastidiosa (strain M12) protein is Uracil-DNA glycosylase.